Here is a 70-residue protein sequence, read N- to C-terminus: Cold shock-like protein CspA (70 aa).

Residues 7 to 67 enclose the CSD domain; the sequence is GSVKWFNETK…GKKGPQAAQV (61 aa).

It localises to the cytoplasm. In Vibrio cholerae serotype O1 (strain ATCC 39315 / El Tor Inaba N16961), this protein is Cold shock-like protein CspA (cspA).